The following is a 245-amino-acid chain: UDP-2,3-diacylglucosamine hydrolase (245 aa).

Asp8, His10, Asp41, Asn79, and His114 together coordinate Mn(2+). Substrate is bound at residue 79 to 80 (NR). Residues Asp122, Ser160, Asn164, Lys167, and His195 each coordinate substrate. The Mn(2+) site is built by His195 and His197.

It belongs to the LpxH family. Mn(2+) serves as cofactor.

Its subcellular location is the cell inner membrane. The enzyme catalyses UDP-2-N,3-O-bis[(3R)-3-hydroxytetradecanoyl]-alpha-D-glucosamine + H2O = 2-N,3-O-bis[(3R)-3-hydroxytetradecanoyl]-alpha-D-glucosaminyl 1-phosphate + UMP + 2 H(+). It functions in the pathway glycolipid biosynthesis; lipid IV(A) biosynthesis; lipid IV(A) from (3R)-3-hydroxytetradecanoyl-[acyl-carrier-protein] and UDP-N-acetyl-alpha-D-glucosamine: step 4/6. Its function is as follows. Hydrolyzes the pyrophosphate bond of UDP-2,3-diacylglucosamine to yield 2,3-diacylglucosamine 1-phosphate (lipid X) and UMP by catalyzing the attack of water at the alpha-P atom. Involved in the biosynthesis of lipid A, a phosphorylated glycolipid that anchors the lipopolysaccharide to the outer membrane of the cell. The protein is UDP-2,3-diacylglucosamine hydrolase of Photobacterium profundum (strain SS9).